Consider the following 181-residue polypeptide: Ribonuclease M5 (181 aa).

The Toprim domain occupies 5 to 88 (KEIIVVEGKD…IKHAYLNTKD (84 aa)). Residues E11, D57, and D59 each contribute to the Mg(2+) site.

This sequence belongs to the ribonuclease M5 family. Requires Mg(2+) as cofactor.

It localises to the cytoplasm. It catalyses the reaction Endonucleolytic cleavage of RNA, removing 21 and 42 nucleotides, respectively, from the 5'- and 3'-termini of a 5S-rRNA precursor.. Its function is as follows. Required for correct processing of both the 5' and 3' ends of 5S rRNA precursor. Cleaves both sides of a double-stranded region yielding mature 5S rRNA in one step. The protein is Ribonuclease M5 of Borreliella burgdorferi (strain ATCC 35210 / DSM 4680 / CIP 102532 / B31) (Borrelia burgdorferi).